Here is a 147-residue protein sequence, read N- to C-terminus: MSLRLNDLKPALGASSSRARVGRGIGSGLGKTAGRGHKGSFARKGGGKIKPGFEGGQTPMQRRLPKIGFRSRSVANTAEVLSYKLDNLEPGEIDFASLRLAKLVPSTAKKAKIVKKGRLTKVFVLKGIESTAGARAMIEATGGSFQE.

A disordered region spans residues 16 to 63; sequence SSRARVGRGIGSGLGKTAGRGHKGSFARKGGGKIKPGFEGGQTPMQRR. Residues 23-33 are compositionally biased toward gly residues; it reads RGIGSGLGKTA. Basic residues predominate over residues 34–47; it reads GRGHKGSFARKGGG.

It belongs to the universal ribosomal protein uL15 family. As to quaternary structure, part of the 50S ribosomal subunit.

Functionally, binds to the 23S rRNA. The protein is Large ribosomal subunit protein uL15 of Xylella fastidiosa (strain Temecula1 / ATCC 700964).